The primary structure comprises 369 residues: Phospho-N-acetylmuramoyl-pentapeptide-transferase (369 aa).

10 consecutive transmembrane segments (helical) span residues 2 to 22 (IALL…TPLF), 55 to 75 (TVVV…MFLM), 86 to 106 (ALIL…DDFI), 120 to 140 (AKLI…LNFP), 163 to 183 (LAFG…NLIV), 196 to 216 (LDGL…LMGI), 239 to 259 (PLDL…FLWW), 266 to 286 (IFMG…FAIL), 291 to 311 (LLLG…IIQV), and 348 to 368 (ILGG…WVVL).

This sequence belongs to the glycosyltransferase 4 family. MraY subfamily. The cofactor is Mg(2+).

The protein resides in the cell membrane. The catalysed reaction is UDP-N-acetyl-alpha-D-muramoyl-L-alanyl-gamma-D-glutamyl-meso-2,6-diaminopimeloyl-D-alanyl-D-alanine + di-trans,octa-cis-undecaprenyl phosphate = di-trans,octa-cis-undecaprenyl diphospho-N-acetyl-alpha-D-muramoyl-L-alanyl-D-glutamyl-meso-2,6-diaminopimeloyl-D-alanyl-D-alanine + UMP. It participates in cell wall biogenesis; peptidoglycan biosynthesis. In terms of biological role, catalyzes the initial step of the lipid cycle reactions in the biosynthesis of the cell wall peptidoglycan: transfers peptidoglycan precursor phospho-MurNAc-pentapeptide from UDP-MurNAc-pentapeptide onto the lipid carrier undecaprenyl phosphate, yielding undecaprenyl-pyrophosphoryl-MurNAc-pentapeptide, known as lipid I. In Pseudarthrobacter chlorophenolicus (strain ATCC 700700 / DSM 12829 / CIP 107037 / JCM 12360 / KCTC 9906 / NCIMB 13794 / A6) (Arthrobacter chlorophenolicus), this protein is Phospho-N-acetylmuramoyl-pentapeptide-transferase.